Reading from the N-terminus, the 392-residue chain is Bone morphogenetic protein 15 (392 aa).

Residues 1–18 (MVLLSILRILFLCELVLF) form the signal peptide. The propeptide occupies 19 to 267 (MEHRAQMAEG…ERESLLRRTR (249 aa)). N-linked (GlcNAc...) asparagine glycosylation is found at Asn87, Asn147, and Asn237. At Gln268 the chain carries Pyrrolidone carboxylic acid; in P16 and P17. Ser273 carries the phosphoserine; in P16 modification. Thr277 is a glycosylation site (O-linked (HexNAc...) threonine; in P17). 3 cysteine pairs are disulfide-bonded: Cys291–Cys357, Cys320–Cys389, and Cys324–Cys391. A glycan (N-linked (GlcNAc...) asparagine) is linked at Asn373.

Belongs to the TGF-beta family. In terms of assembly, homodimer. But, in contrast to other members of this family, cannot be disulfide-linked.

It is found in the secreted. May be involved in follicular development. Oocyte-specific growth/differentiation factor that stimulates folliculogenesis and granulosa cell (GC) growth. The protein is Bone morphogenetic protein 15 (BMP15) of Homo sapiens (Human).